Consider the following 546-residue polypeptide: 2-isopropylmalate synthase (546 aa).

Residues 8 to 271 (ILIFDTTLRD…NSFFKRNPDS (264 aa)) form the Pyruvate carboxyltransferase domain. Residues aspartate 17, histidine 208, histidine 210, and asparagine 244 each contribute to the Mn(2+) site. The regulatory domain stretch occupies residues 408 to 546 (QLCLVQVSCG…NKTFLSNPAN (139 aa)).

Belongs to the alpha-IPM synthase/homocitrate synthase family. LeuA type 1 subfamily. As to quaternary structure, homodimer. Mn(2+) serves as cofactor.

It is found in the cytoplasm. It carries out the reaction 3-methyl-2-oxobutanoate + acetyl-CoA + H2O = (2S)-2-isopropylmalate + CoA + H(+). Its pathway is amino-acid biosynthesis; L-leucine biosynthesis; L-leucine from 3-methyl-2-oxobutanoate: step 1/4. Catalyzes the condensation of the acetyl group of acetyl-CoA with 3-methyl-2-oxobutanoate (2-ketoisovalerate) to form 3-carboxy-3-hydroxy-4-methylpentanoate (2-isopropylmalate). The protein is 2-isopropylmalate synthase of Prochlorococcus marinus (strain MIT 9312).